A 371-amino-acid chain; its full sequence is Methionine import ATP-binding protein MetN (371 aa).

Residues 29 to 270 enclose the ABC transporter domain; that stretch reads IRIEGVRKVY…PRHEVTRRFV (242 aa). 67-74 lines the ATP pocket; it reads GRSGAGKS.

The protein belongs to the ABC transporter superfamily. Methionine importer (TC 3.A.1.24) family. As to quaternary structure, the complex is composed of two ATP-binding proteins (MetN), two transmembrane proteins (MetI) and a solute-binding protein (MetQ).

Its subcellular location is the cell inner membrane. The catalysed reaction is L-methionine(out) + ATP + H2O = L-methionine(in) + ADP + phosphate + H(+). It carries out the reaction D-methionine(out) + ATP + H2O = D-methionine(in) + ADP + phosphate + H(+). Functionally, part of the ABC transporter complex MetNIQ involved in methionine import. Responsible for energy coupling to the transport system. The polypeptide is Methionine import ATP-binding protein MetN (Rhodopseudomonas palustris (strain BisA53)).